The primary structure comprises 122 residues: Atrial gland peptide B (122 aa).

The first 21 residues, 1–21 (MKANTMFIILCLTLSTLCVSS), serve as a signal peptide directing secretion. The propeptide occupies 22–34 (QFTSVLGKIFVTN). An Isoleucine amide modification is found at Ile69. The propeptide occupies 73-122 (AAGGMEQSEGQNPETKSHSWRERSVLTPSLLSLGESLESGISKRISINQD). The interval 74–95 (AGGMEQSEGQNPETKSHSWRER) is disordered.

Belongs to the molluscan ELH family.

The protein localises to the secreted. In terms of biological role, the atrial gland peptide A and peptide B precursors are the source of the 2 peptides that, upon release from this reproductive system gland, initiate the egg-laying process by exciting the bag cell neurons. These neurons, clustered in neural connectives near the abdominal ganglion, in turn release other peptides that act directly on the ganglion and also, via the circulating hemolymph, on many other organs to control the physiological processes of egg-laying. One of these other peptides is the egg-laying hormone. This chain is Atrial gland peptide B, found in Aplysia californica (California sea hare).